Reading from the N-terminus, the 446-residue chain is uncharacterized protein (446 aa).

3 disordered regions span residues 198 to 233 (SIQK…ENYS), 309 to 337 (NEDN…DDSK), and 394 to 431 (SESV…FGNT). Residues 199-224 (IQKQIPKQTQEQTQKQTQEQTQESSQ) are compositionally biased toward low complexity. The segment covering 317–333 (DNEEDSDESDIESDSDL) has biased composition (acidic residues). The span at 397 to 418 (VKSDSNESKSIKPESIKSESIK) shows a compositional bias: basic and acidic residues.

This is an uncharacterized protein from Acanthamoeba polyphaga mimivirus (APMV).